We begin with the raw amino-acid sequence, 733 residues long: FYVE, RhoGEF and PH domain-containing protein 3 (733 aa).

Composition is skewed to polar residues over residues 1–11 (MELGRSSSTPQ), 47–60 (HSSS…STRE), and 106–117 (ETASDSRVPQDN). The disordered stretch occupies residues 1-134 (MELGRSSSTP…GVGEEPDPKV (134 aa)). The segment covering 118 to 129 (PQEEEDSGVGEE) has biased composition (acidic residues). S124 carries the phosphoserine modification. A DH domain is found at 153-337 (KLLHIAQELL…STAADHSNAA (185 aa)). Residues 366–465 (ELIKEGSIQK…WIQVIQATVE (100 aa)) enclose the PH 1 domain. The disordered stretch occupies residues 481–535 (CSQDEEPTLSPDQPVMSTSSVEPAGVADSNGGTPGIESRKSSSKTRRDKEKPGCK). Residues 517 to 533 (ESRKSSSKTRRDKEKPG) show a composition bias toward basic and acidic residues. The FYVE-type zinc finger occupies 528-584 (DKEKPGCKSCGETFNSITKRRYRCKLCGEVICRKCSEFKAENSKQSRVCRECFLEEP). C534, C537, C551, C554, C559, C562, C576, and C579 together coordinate Zn(2+). Disordered stretches follow at residues 586–612 (VPPS…DPRP) and 712–733 (GDTA…TDTP). In terms of domain architecture, PH 2 spans 612-711 (PSLLCGTLNL…WLKALGTAVH (100 aa)). The residue at position 732 (T732) is a Phosphothreonine.

As to expression, detected in adult brain, spleen, lung and skeletal muscle. Detected in embryos from 7 dpc to 17 dpc.

The protein localises to the cytoplasm. It localises to the cytoskeleton. Functionally, promotes the formation of filopodia. May activate CDC42, a member of the Ras-like family of Rho- and Rac proteins, by exchanging bound GDP for free GTP. Plays a role in regulating the actin cytoskeleton and cell shape. This chain is FYVE, RhoGEF and PH domain-containing protein 3 (Fgd3), found in Mus musculus (Mouse).